Reading from the N-terminus, the 493-residue chain is Chromosomal replication initiator protein DnaA (493 aa).

Residues 1-105 form a domain I, interacts with DnaA modulators region; that stretch reads MSDTIQQEAP…LMYSIVIDKS (105 aa). Positions 105-152 are domain II; that stretch reads SQGQPVTIELPHQIDAAPAERSVRPEAPGQKASAERERLEIARPRFES. Residues 121–140 are disordered; it reads APAERSVRPEAPGQKASAER. Positions 153–370 are domain III, AAA+ region; it reads NLNPKYTFST…GCIVKLLAAH (218 aa). ATP contacts are provided by Gly-198, Gly-200, Lys-201, and Thr-202. The interval 371–493 is domain IV, binds dsDNA; that stretch reads SLDNQEIDLQ…LRKRIEIMSM (123 aa).

This sequence belongs to the DnaA family. Oligomerizes as a right-handed, spiral filament on DNA at oriC.

Its subcellular location is the cytoplasm. Plays an essential role in the initiation and regulation of chromosomal replication. ATP-DnaA binds to the origin of replication (oriC) to initiate formation of the DNA replication initiation complex once per cell cycle. Binds the DnaA box (a 9 base pair repeat at the origin) and separates the double-stranded (ds)DNA. Forms a right-handed helical filament on oriC DNA; dsDNA binds to the exterior of the filament while single-stranded (ss)DNA is stabiized in the filament's interior. The ATP-DnaA-oriC complex binds and stabilizes one strand of the AT-rich DNA unwinding element (DUE), permitting loading of DNA polymerase. After initiation quickly degrades to an ADP-DnaA complex that is not apt for DNA replication. Binds acidic phospholipids. This chain is Chromosomal replication initiator protein DnaA, found in Chlorobaculum tepidum (strain ATCC 49652 / DSM 12025 / NBRC 103806 / TLS) (Chlorobium tepidum).